Reading from the N-terminus, the 448-residue chain is Asparagine--tRNA ligase (448 aa).

It belongs to the class-II aminoacyl-tRNA synthetase family. As to quaternary structure, homodimer.

The protein localises to the cytoplasm. The enzyme catalyses tRNA(Asn) + L-asparagine + ATP = L-asparaginyl-tRNA(Asn) + AMP + diphosphate + H(+). The sequence is that of Asparagine--tRNA ligase from Streptococcus pyogenes serotype M2 (strain MGAS10270).